The following is a 586-amino-acid chain: Protein HOL1 (586 aa).

Residues 1–66 (MDKYTNRDHP…NWSSWRKLAH (66 aa)) lie on the Extracellular side of the membrane. Residues 67–87 (FGLMAFITAFTAATSNDAGAA) form a helical membrane-spanning segment. Topologically, residues 88–103 (QDSLNEIYGISYDSMN) are cytoplasmic. Residues 104–124 (TGAGVLFLGIGWSTLFLAPFA) traverse the membrane as a helical segment. Residues 125 to 130 (NLYGRK) lie on the Extracellular side of the membrane. The chain crosses the membrane as a helical span at residues 131–151 (ITYIVCTTLGLFGALWFALAK). Residues 152–189 (RTSDTIWSQLFVGISESCAEAQVQLSLSDIFFQHQLGS) are Cytoplasmic-facing. Residues 190-210 (VLTVYIMCTSIGTFLGPLIAG) form a helical membrane-spanning segment. Over 211 to 219 (YISAFTNFR) the chain is Extracellular. Residues 220 to 240 (WVGWVAVIISGGLLITIIFGC) form a helical membrane-spanning segment. The Cytoplasmic portion of the chain corresponds to 241–362 (EETYFDRGQY…YFKYLKINLR (122 aa)). The helical transmembrane segment at 363 to 383 (MFLFPPVWLSGMFWGIQDVFL) threads the bilayer. The Extracellular portion of the chain corresponds to 384-413 (TFYLTTQESAYYEPPWNYSDFGVAIMNVPT). A helical transmembrane segment spans residues 414–434 (LIGAVIGCICAGIVSDYFVLW). At 435 to 448 (MARHNRGILEAEFR) the chain is on the cytoplasmic side. A helical transmembrane segment spans residues 449–469 (LYFSIATAIIGPAGLLMFGIG). The Extracellular segment spans residues 470 to 477 (TARQWPWQ). A helical membrane pass occupies residues 478 to 498 (AIYVGLGFVGFAWGCSGDIAM). Over 499-508 (AYLMDCYPDM) the chain is Cytoplasmic. The helical transmembrane segment at 509 to 529 (VLEGMVCTAIINNTISCIFTF) threads the bilayer. Residues 530–544 (TCSDWLAASGTENTY) are Extracellular-facing. A helical membrane pass occupies residues 545–565 (IALAVINFGITAFALPMYYYG). Residues 566–586 (KRIRLWTKRWYLQSVNLRDGV) lie on the Cytoplasmic side of the membrane.

It is found in the membrane. Its function is as follows. Seems to be involved in the uptake of several cations and of histidinol. This chain is Protein HOL1 (HOL1), found in Saccharomyces cerevisiae (strain ATCC 204508 / S288c) (Baker's yeast).